A 115-amino-acid chain; its full sequence is NAD(P)H-quinone oxidoreductase subunit M, organellar chromatophore (115 aa).

The protein belongs to the complex I NdhM subunit family. As to quaternary structure, NDH-1 can be composed of about 15 different subunits; different subcomplexes with different compositions have been identified which probably have different functions.

The protein localises to the plastid. It is found in the organellar chromatophore thylakoid membrane. The catalysed reaction is a plastoquinone + NADH + (n+1) H(+)(in) = a plastoquinol + NAD(+) + n H(+)(out). It carries out the reaction a plastoquinone + NADPH + (n+1) H(+)(in) = a plastoquinol + NADP(+) + n H(+)(out). In terms of biological role, NDH-1 shuttles electrons from an unknown electron donor, via FMN and iron-sulfur (Fe-S) centers, to quinones in the respiratory and/or the photosynthetic chain. The immediate electron acceptor for the enzyme in this species is believed to be plastoquinone. Couples the redox reaction to proton translocation, and thus conserves the redox energy in a proton gradient. This is NAD(P)H-quinone oxidoreductase subunit M, organellar chromatophore from Paulinella chromatophora.